Reading from the N-terminus, the 122-residue chain is Urease subunit beta (122 aa).

The disordered stretch occupies residues 92-122 (GLRPEYAGELDGRGHEPTAPNYGEKGQGHFE).

The protein belongs to the urease beta subunit family. Heterotrimer of UreA (gamma), UreB (beta) and UreC (alpha) subunits. Three heterotrimers associate to form the active enzyme.

Its subcellular location is the cytoplasm. It carries out the reaction urea + 2 H2O + H(+) = hydrogencarbonate + 2 NH4(+). The protein operates within nitrogen metabolism; urea degradation; CO(2) and NH(3) from urea (urease route): step 1/1. The polypeptide is Urease subunit beta (Saccharopolyspora erythraea (strain ATCC 11635 / DSM 40517 / JCM 4748 / NBRC 13426 / NCIMB 8594 / NRRL 2338)).